We begin with the raw amino-acid sequence, 33 residues long: Pardaxin P-1 (33 aa).

It belongs to the pardaxin family. As to quaternary structure, in aqueous solution exists as a tetramer.

It localises to the secreted. Its subcellular location is the target cell membrane. Functionally, exhibits unusual shark repellent and surfactant properties. Forms voltage-dependent, ion-permeable channels in membranes. At high concentration causes cell membrane lysis. Causes death in killfish oryzias latipes in 30 minutes at a concentration of 25 micrograms/ml. The sequence is that of Pardaxin P-1 from Pardachirus pavoninus (Peacock sole).